We begin with the raw amino-acid sequence, 339 residues long: Annexin A2 (339 aa).

Ser2 bears the N-acetylserine mark. The S100A10-binding site stretch occupies residues 2–24 (STVHEILSKLSLEGDHSLPPSAY). Residue Tyr24 is modified to Phosphotyrosine; by SRC. Thr26 carries the post-translational modification Phosphothreonine; by PKC. Annexin repeat units follow at residues 33–104 (FDAD…GLLK), 105–176 (TPSQ…ALAK), 189–261 (ELID…NLVQ), and 265–336 (NKQL…NLCG).

The protein belongs to the annexin family. In terms of assembly, heterotetramer containing 2 light chains of S100A10/p11 and 2 heavy chains of ANXA2/p36.

It localises to the secreted. The protein resides in the extracellular space. The protein localises to the extracellular matrix. It is found in the basement membrane. Functionally, calcium-regulated membrane-binding protein whose affinity for calcium is greatly enhanced by anionic phospholipids. It binds two calcium ions with high affinity. This is Annexin A2 (ANXA2) from Gallus gallus (Chicken).